The primary structure comprises 443 residues: Trimethylamine monooxygenase (443 aa).

FAD is bound by residues Asp37, Gln39, Leu45, and Trp46. NADP(+) contacts are provided by Trp70 and Asn72. Residues Asn72 and Val125 each coordinate FAD. Residues Tyr170, Ser202, Ser203, Ser205, and Arg226 each contribute to the NADP(+) site. FAD-binding residues include Gln315 and Thr318. Arg409 is an NADP(+) binding site.

This sequence belongs to the FMO family. FAD is required as a cofactor.

It catalyses the reaction trimethylamine + NADPH + O2 = trimethylamine N-oxide + NADP(+) + H2O. Catalyzes the oxidation of trimethylamine (TMA) to produce trimethylamine N-oxide (TMAO). In vitro, has a broad substrate specificity, oxidizing many nitrogen- and sulfur-containing compounds, including dimethylamine (DMA), dimethylsulfide (DMS) and dimethylsulfoxide (DMSO). This is Trimethylamine monooxygenase from Pelagibacter ubique (strain HTCC1002).